Consider the following 623-residue polypeptide: Glutathione import ATP-binding protein GsiA (623 aa).

ABC transporter domains follow at residues 15–269 and 314–564; these read VENL…RALL and LRVR…RKLL. Residues 49-56 and 357-364 contribute to the ATP site; these read GESGSGKS.

The protein belongs to the ABC transporter superfamily. Glutathione importer (TC 3.A.1.5.11) family. As to quaternary structure, the complex is composed of two ATP-binding proteins (GsiA), two transmembrane proteins (GsiC and GsiD) and a solute-binding protein (GsiB).

Its subcellular location is the cell inner membrane. It catalyses the reaction glutathione(out) + ATP + H2O = glutathione(in) + ADP + phosphate + H(+). With respect to regulation, inhibited by verapamil but not by carbonyl cyanide m-chlorophenylhydrazone (CCCP). Part of the ABC transporter complex GsiABCD involved in glutathione import. Responsible for energy coupling to the transport system. This is Glutathione import ATP-binding protein GsiA from Escherichia coli (strain K12).